A 511-amino-acid polypeptide reads, in one-letter code: uncharacterized protein (511 aa).

The region spanning 13–45 (IYDALNMLVYDYLLKMKYEGSAKIFFNEAGLEN) is the LisH domain. Residues 172 to 212 (PRFEEQGVPPAKMAPKQFRDEGRSGNVESPSIATNQEGSSP) form a disordered region. Positions 197 to 210 (NVESPSIATNQEGS) are enriched in polar residues.

This is an uncharacterized protein from Encephalitozoon cuniculi (strain GB-M1) (Microsporidian parasite).